A 305-amino-acid polypeptide reads, in one-letter code: Fatty acid elongase 1 (305 aa).

Transmembrane regions (helical) follow at residues 24 to 44, 80 to 100, 129 to 149, 158 to 178, 183 to 203, 217 to 237, and 257 to 277; these read MIAN…FVFI, VVWN…VTPV, FWMG…IFLV, FLHW…YCVG, IWVA…FALA, YITI…IFAL, and IQLV…VASY. Positions 160 to 164 match the HxxHH motif motif; that stretch reads HWYHH. H163 serves as the catalytic Nucleophile. A disordered region spans residues 284–305; it reads PTVGGPSSTAGVSNGSVEKKVK. The span at 288-299 shows a compositional bias: polar residues; it reads GPSSTAGVSNGS. N297 is a glycosylation site (N-linked (GlcNAc...) asparagine).

Belongs to the ELO family.

The protein localises to the endoplasmic reticulum membrane. The enzyme catalyses an acyl-CoA + malonyl-CoA + H(+) = a 3-oxoacyl-CoA + CO2 + CoA. It participates in lipid metabolism; fatty acid biosynthesis. Functionally, involved in the synthesis of fatty acids. Elongates C4 fatty acids to C10. This chain is Fatty acid elongase 1, found in Trypanosoma brucei brucei (strain 927/4 GUTat10.1).